The chain runs to 173 residues: Acireductone dioxygenase 1 (173 aa).

Residues His-96, His-98, Glu-102, and His-140 each contribute to the Fe(2+) site. Ni(2+)-binding residues include His-96, His-98, Glu-102, and His-140.

It belongs to the acireductone dioxygenase (ARD) family. As to quaternary structure, monomer. The cofactor is Fe(2+). Requires Ni(2+) as cofactor.

It catalyses the reaction 1,2-dihydroxy-5-(methylsulfanyl)pent-1-en-3-one + O2 = 3-(methylsulfanyl)propanoate + CO + formate + 2 H(+). The catalysed reaction is 1,2-dihydroxy-5-(methylsulfanyl)pent-1-en-3-one + O2 = 4-methylsulfanyl-2-oxobutanoate + formate + 2 H(+). The protein operates within amino-acid biosynthesis; L-methionine biosynthesis via salvage pathway; L-methionine from S-methyl-5-thio-alpha-D-ribose 1-phosphate: step 5/6. Catalyzes 2 different reactions between oxygen and the acireductone 1,2-dihydroxy-3-keto-5-methylthiopentene (DHK-MTPene) depending upon the metal bound in the active site. Fe-containing acireductone dioxygenase (Fe-ARD) produces formate and 2-keto-4-methylthiobutyrate (KMTB), the alpha-ketoacid precursor of methionine in the methionine recycle pathway. Ni-containing acireductone dioxygenase (Ni-ARD) produces methylthiopropionate, carbon monoxide and formate, and does not lie on the methionine recycle pathway. The polypeptide is Acireductone dioxygenase 1 (Pectobacterium atrosepticum (strain SCRI 1043 / ATCC BAA-672) (Erwinia carotovora subsp. atroseptica)).